A 293-amino-acid polypeptide reads, in one-letter code: Ribosomal protein L11 methyltransferase (293 aa).

Thr145, Gly166, Asp188, and Asn230 together coordinate S-adenosyl-L-methionine.

The protein belongs to the methyltransferase superfamily. PrmA family.

Its subcellular location is the cytoplasm. The enzyme catalyses L-lysyl-[protein] + 3 S-adenosyl-L-methionine = N(6),N(6),N(6)-trimethyl-L-lysyl-[protein] + 3 S-adenosyl-L-homocysteine + 3 H(+). Methylates ribosomal protein L11. In Shewanella sediminis (strain HAW-EB3), this protein is Ribosomal protein L11 methyltransferase.